The sequence spans 75 residues: UPF0352 protein ASA_2693 (75 aa).

This sequence belongs to the UPF0352 family.

The sequence is that of UPF0352 protein ASA_2693 from Aeromonas salmonicida (strain A449).